The primary structure comprises 228 residues: MSQSPIELKGSSFTLSVIHLHDSRPEVIRQALQEKVDQAPAFLKNAPVVINVATLPNGANWKDLQQAVTSAGLRIVGISGCQDERQKRAIARAGLPLLSEGKGQKMAPEPVVSPPENVPTKTRIINTPVRSGQQIYARNCDLIVISSVSAGAELIADGNIHIYGMMRGRALAGASGDAQCQIFCTHLGAELVSIAGQYWLSDQIPSDYFGQAARLHLLDNALTIQPLN.

The protein belongs to the MinC family. As to quaternary structure, interacts with MinD and FtsZ.

Its function is as follows. Cell division inhibitor that blocks the formation of polar Z ring septums. Rapidly oscillates between the poles of the cell to destabilize FtsZ filaments that have formed before they mature into polar Z rings. Prevents FtsZ polymerization. The chain is Probable septum site-determining protein MinC from Yersinia enterocolitica serotype O:8 / biotype 1B (strain NCTC 13174 / 8081).